We begin with the raw amino-acid sequence, 388 residues long: Phosphoglycerate kinase (388 aa).

Substrate-binding positions include D24–N26, R37, R56–R59, R117, and R165. The disordered stretch occupies residues N26 to R136. The segment covering E34 to G55 has biased composition (basic and acidic residues). Residues G102–R136 are compositionally biased toward basic residues. Residues K215, G303, E334, and G363–S366 contribute to the ATP site.

Belongs to the phosphoglycerate kinase family. In terms of assembly, monomer.

The protein resides in the cytoplasm. It catalyses the reaction (2R)-3-phosphoglycerate + ATP = (2R)-3-phospho-glyceroyl phosphate + ADP. The protein operates within carbohydrate degradation; glycolysis; pyruvate from D-glyceraldehyde 3-phosphate: step 2/5. The sequence is that of Phosphoglycerate kinase (pgk) from Mycobacterium avium.